The following is a 297-amino-acid chain: Phosphatidylserine decarboxylase proenzyme (297 aa).

Catalysis depends on charge relay system; for autoendoproteolytic cleavage activity residues D100, H157, and S263. S263 acts as the Schiff-base intermediate with substrate; via pyruvic acid; for decarboxylase activity in catalysis. S263 carries the post-translational modification Pyruvic acid (Ser); by autocatalysis.

Belongs to the phosphatidylserine decarboxylase family. PSD-B subfamily. Prokaryotic type I sub-subfamily. As to quaternary structure, heterodimer of a large membrane-associated beta subunit and a small pyruvoyl-containing alpha subunit. The cofactor is pyruvate. Is synthesized initially as an inactive proenzyme. Formation of the active enzyme involves a self-maturation process in which the active site pyruvoyl group is generated from an internal serine residue via an autocatalytic post-translational modification. Two non-identical subunits are generated from the proenzyme in this reaction, and the pyruvate is formed at the N-terminus of the alpha chain, which is derived from the carboxyl end of the proenzyme. The autoendoproteolytic cleavage occurs by a canonical serine protease mechanism, in which the side chain hydroxyl group of the serine supplies its oxygen atom to form the C-terminus of the beta chain, while the remainder of the serine residue undergoes an oxidative deamination to produce ammonia and the pyruvoyl prosthetic group on the alpha chain. During this reaction, the Ser that is part of the protease active site of the proenzyme becomes the pyruvoyl prosthetic group, which constitutes an essential element of the active site of the mature decarboxylase.

Its subcellular location is the cell membrane. It carries out the reaction a 1,2-diacyl-sn-glycero-3-phospho-L-serine + H(+) = a 1,2-diacyl-sn-glycero-3-phosphoethanolamine + CO2. Its pathway is phospholipid metabolism; phosphatidylethanolamine biosynthesis; phosphatidylethanolamine from CDP-diacylglycerol: step 2/2. Functionally, catalyzes the formation of phosphatidylethanolamine (PtdEtn) from phosphatidylserine (PtdSer). This chain is Phosphatidylserine decarboxylase proenzyme, found in Actinobacillus pleuropneumoniae serotype 5b (strain L20).